The primary structure comprises 228 residues: uncharacterized protein (228 aa).

The 109-residue stretch at 99-207 (LANKVPFVVC…PKIKVGKPFI (109 aa)) folds into the tRNA-binding domain.

This is an uncharacterized protein from Mycoplasma genitalium (strain ATCC 33530 / DSM 19775 / NCTC 10195 / G37) (Mycoplasmoides genitalium).